The following is a 634-amino-acid chain: Sodium-dependent neutral amino acid transporter B(0)AT1 (634 aa).

Over 1–41 (MVRLVLPNPGLDARIPSLAELETIEQEEASSRPKWDNKAQY) the chain is Cytoplasmic. Serine 17 is modified (phosphoserine). The helical transmembrane segment at 42 to 62 (MLTCLGFCVGLGNVWRFPYLC) threads the bilayer. At 63–67 (QSHGG) the chain is on the extracellular side. Residues 68 to 88 (GAFMIPFLILLVLEGIPLLYL) form a helical membrane-spanning segment. Residues 89 to 120 (EFAIGQRLRRGSLGVWSSIHPALKGLGLASML) are Cytoplasmic-facing. A helical transmembrane segment spans residues 121-141 (TSFMVGLYYNTIISWIMWYLF). The Extracellular segment spans residues 142-192 (NSFQEPLPWSDCPLNENQTGYVDECARSSPVDYFWYRETLNISTSISDSGS). Asparagine 158 and asparagine 182 each carry an N-linked (GlcNAc...) asparagine glycan. The chain crosses the membrane as a helical span at residues 193–213 (IQWWMLLCLACAWSVLYMCTI). Residues 214–221 (RGIETTGK) are Cytoplasmic-facing. The helical transmembrane segment at 222-242 (AVYITSTLPYVVLTIFLIRGL) threads the bilayer. The Extracellular segment spans residues 243–268 (TLKGATNGIVFLFTPNVTELAQPDTW). Asparagine 258 carries N-linked (GlcNAc...) asparagine glycosylation. A helical membrane pass occupies residues 269–289 (LDAGAQVFFSFSLAFGGLISF). Over 290-304 (SSYNSVHNNCEKDSV) the chain is Cytoplasmic. Residues 305-325 (IVSIINGFTSVYVAIVVYSVI) form a helical membrane-spanning segment. At 326-413 (GFRATQRYDD…TEAITKMPLS (88 aa)) the chain is on the extracellular side. N-linked (GlcNAc...) asparagine glycosylation is found at asparagine 354 and asparagine 368. A helical membrane pass occupies residues 414-434 (PLWSVLFFIMLFCLGLSSMFG). Over 435-456 (NMEGVVVPLQDLRVIPPKWPKE) the chain is Cytoplasmic. Residues 457 to 477 (VLTGLICLGTFLIGFIFTLNS) form a helical membrane-spanning segment. The Extracellular segment spans residues 478-490 (GQYWLSLLDSYAG). A helical membrane pass occupies residues 491 to 511 (SIPLLIIAFCEMFSVVYVYGV). The Cytoplasmic portion of the chain corresponds to 512–531 (DRFNKDIEFMIGHKPNIFWQ). The helical transmembrane segment at 532–552 (VTWRVVSPLLMLIIFLFFFVV) threads the bilayer. The Extracellular segment spans residues 553–581 (EVSQELTYSIWDPGYEEFPKSQKISYPNW). The chain crosses the membrane as a helical span at residues 582 to 602 (VYVVVVIVAGVPSLTIPGYAI). The Cytoplasmic segment spans residues 603-634 (YKLIRNHCQKPGDHQGLVSTLSTASMNGDLKY). Residue serine 627 is modified to Phosphoserine.

It belongs to the sodium:neurotransmitter symporter (SNF) (TC 2.A.22) family. SLC6A19 subfamily. As to quaternary structure, interacts in a tissue-specific manner with ACE2 in small intestine and with CLTRN in the kidney. Interacts with CLTRN; this interaction is required for trafficking of SLC6A19 to the plasma membrane and for its catalytic activation in kidneys. Interacts with ACE2; this interaction is required for trafficking of SLC6A19 to the plasma membrane and for its catalytic activation in intestine. Interacts with ANPEP; the interaction positively regulates its amino acid transporter activity. Robust expression in kidney and small intestine, with minimal expression in pancreas. Also expressed in stomach, liver, duodenum, ileocecum, colon and prostate. Not detected in testis, whole brain, cerebellum, fetal liver, spleen, skeletal muscle, uterus, heart or lung.

It is found in the cell membrane. The protein resides in the apical cell membrane. The enzyme catalyses L-alanine(in) + Na(+)(in) = L-alanine(out) + Na(+)(out). It carries out the reaction L-cysteine(in) + Na(+)(in) = L-cysteine(out) + Na(+)(out). It catalyses the reaction L-glutamine(in) + Na(+)(in) = L-glutamine(out) + Na(+)(out). The catalysed reaction is glycine(in) + Na(+)(in) = glycine(out) + Na(+)(out). The enzyme catalyses L-isoleucine(in) + Na(+)(in) = L-isoleucine(out) + Na(+)(out). It carries out the reaction L-leucine(in) + Na(+)(in) = L-leucine(out) + Na(+)(out). It catalyses the reaction L-methionine(in) + Na(+)(in) = L-methionine(out) + Na(+)(out). The catalysed reaction is L-phenylalanine(in) + Na(+)(in) = L-phenylalanine(out) + Na(+)(out). The enzyme catalyses L-serine(in) + Na(+)(in) = L-serine(out) + Na(+)(out). It carries out the reaction L-tryptophan(in) + Na(+)(in) = L-tryptophan(out) + Na(+)(out). It catalyses the reaction L-tyrosine(in) + Na(+)(in) = L-tyrosine(out) + Na(+)(out). The catalysed reaction is L-valine(in) + Na(+)(in) = L-valine(out) + Na(+)(out). Functionally, transporter that mediates resorption of neutral amino acids across the apical membrane of renal and intestinal epithelial cells. This uptake is sodium-dependent and chloride-independent. Requires CLTRN in kidney or ACE2 in intestine for cell surface expression and amino acid transporter activity. This chain is Sodium-dependent neutral amino acid transporter B(0)AT1 (SLC6A19), found in Homo sapiens (Human).